The chain runs to 133 residues: Salmonella pathogenicity island 2 protein C (133 aa).

Interacts with the mammalian NIPSNAP3A and HOOK3 proteins in infected cells.

The protein localises to the secreted. Its subcellular location is the cytoplasm. Virulence protein that plays a central role in mammalian macrophage infection, by inhibiting phagosome-lysosome fusion and cellular trafficking, including trafficking of organelles that are devoid of Salmonella. May act by disrupting the function of the mammalian HOOK3 protein, a protein involved in the cellular traffic. Also required for actin ADP-ribosylase SpvB activity. This Salmonella typhimurium (strain 14028s / SGSC 2262) protein is Salmonella pathogenicity island 2 protein C (spiC).